Consider the following 63-residue polypeptide: Toxin S6C6 (63 aa).

Cystine bridges form between C3–C24, C6–C11, C17–C39, C43–C55, and C56–C61.

This sequence belongs to the three-finger toxin family. Ancestral subfamily. Orphan group XIX sub-subfamily. In terms of tissue distribution, expressed by the venom gland.

It localises to the secreted. May enhance presynaptic acetylcholine release. This chain is Toxin S6C6, found in Dendroaspis jamesoni kaimosae (Eastern Jameson's mamba).